The following is a 349-amino-acid chain: Transcription repressor OFP5 (349 aa).

Disordered stretches follow at residues 1–20 (MMRWGRKKPVSSSSSSGLSR), 29–94 (KLSG…KESN), and 143–183 (KQRC…GYSR). The segment covering 10 to 20 (VSSSSSSGLSR) has biased composition (low complexity). The segment covering 37–48 (KPAKEKKQDEKA) has biased composition (basic and acidic residues). Polar residues predominate over residues 49-62 (SQNISVKTSLSSTT). 2 stretches are compositionally biased toward basic and acidic residues: residues 63–94 (RRSDIHENSKRFQRVSVEKENSATRSADKESN) and 143–167 (KQRCERRDQRLLEQKPKRSEQDAGV). In terms of domain architecture, OVATE spans 286–345 (VVKCSSDPQKDFRDSMIEMIMENGINHPEELKELLVCYLRLNTDEYHDMIISVFQQVHND).

As to quaternary structure, interacts with BLH1, BLH2, BLH3, BLH4, BLH6 and BLH10. In terms of tissue distribution, expressed in roots, rosette and cauline leaves, and flower buds.

Its subcellular location is the nucleus. Its function is as follows. Transcriptional repressor that regulates multiple aspects of plant growth and development through the regulation of BEL1-LIKE (BLH) and KNOX TALE (KNAT) homeodomain transcription factors. Required for embryo development. This chain is Transcription repressor OFP5 (OFP5), found in Arabidopsis thaliana (Mouse-ear cress).